A 210-amino-acid polypeptide reads, in one-letter code: Large ribosomal subunit protein uL3 (210 aa).

This sequence belongs to the universal ribosomal protein uL3 family. In terms of assembly, part of the 50S ribosomal subunit. Forms a cluster with proteins L14 and L19.

One of the primary rRNA binding proteins, it binds directly near the 3'-end of the 23S rRNA, where it nucleates assembly of the 50S subunit. In Pediococcus pentosaceus (strain ATCC 25745 / CCUG 21536 / LMG 10740 / 183-1w), this protein is Large ribosomal subunit protein uL3.